The primary structure comprises 176 residues: Oleosin Ara h 14.0103 (176 aa).

Ala2 is subject to N-acetylalanine; alternate. Transmembrane regions (helical) follow at residues 50 to 70 (IIAVLVGVPTGGTLLLLSGLS), 75 to 95 (IIGLAIATPVFIFFSPVIVPA), and 96 to 116 (VVTIGLAVTGILTAGACGLTG). The interval 156–176 (KTKDAGQEIQTKAQDVKRSSS) is disordered.

It belongs to the oleosin family. Expressed in seeds (at protein level).

The protein localises to the lipid droplet. It is found in the membrane. May have a structural role to stabilize the lipid body during desiccation of the seed by preventing coalescence of the oil. Probably interacts with both lipid and phospholipid moieties of lipid bodies. May also provide recognition signals for specific lipase anchorage in lipolysis during seedling growth. This is Oleosin Ara h 14.0103 from Arachis hypogaea (Peanut).